A 208-amino-acid polypeptide reads, in one-letter code: uncharacterized protein (208 aa).

The first 16 residues, 1-16 (MTRVALLTTGRELSQA), serve as a signal peptide directing secretion. 2 disordered regions span residues 1–95 (MTRV…VRGQ) and 145–176 (RVTK…SAAD). Positions 16 to 25 (AAPPARARTP) are enriched in low complexity. Residues 32-43 (RGERPDDGGHAP) show a composition bias toward basic and acidic residues. The segment covering 44–54 (HRDRRVNQRRR) has biased composition (basic residues). Residues 55 to 95 (QVGDRRAQRGVDEHPWRRPDERPNDHLPQRNSERPEGVRGQ) are compositionally biased toward basic and acidic residues. Composition is skewed to polar residues over residues 148 to 158 (KVSSSGPNSTP) and 167 to 176 (GTNNAPSAAD).

This is an uncharacterized protein from Mycobacterium tuberculosis (strain CDC 1551 / Oshkosh).